Here is a 297-residue protein sequence, read N- to C-terminus: Tyrosine recombinase XerC (297 aa).

In terms of domain architecture, Core-binding (CB) spans 1–84 (MEEIQVTFLN…TLRTFYEFWM (84 aa)). The Tyr recombinase domain maps to 105–286 (YLPQFFYEEE…SNQQLRKVYL (182 aa)). Active-site residues include Arg145, Lys169, His238, Arg241, and His264. Residue Tyr273 is the O-(3'-phospho-DNA)-tyrosine intermediate of the active site.

This sequence belongs to the 'phage' integrase family. XerC subfamily. As to quaternary structure, forms a cyclic heterotetrameric complex composed of two molecules of XerC and two molecules of XerD.

It localises to the cytoplasm. In terms of biological role, site-specific tyrosine recombinase, which acts by catalyzing the cutting and rejoining of the recombining DNA molecules. The XerC-XerD complex is essential to convert dimers of the bacterial chromosome into monomers to permit their segregation at cell division. It also contributes to the segregational stability of plasmids. The chain is Tyrosine recombinase XerC from Staphylococcus haemolyticus (strain JCSC1435).